A 710-amino-acid chain; its full sequence is Elongation factor G (710 aa).

One can recognise a tr-type G domain in the interval 8–297 (ERVRNIGIAA…AVVDYLPSPI (290 aa)). Residues 17–24 (AHIDAGKT), 96–100 (DTPGH), and 150–153 (NKMD) each bind GTP.

Belongs to the TRAFAC class translation factor GTPase superfamily. Classic translation factor GTPase family. EF-G/EF-2 subfamily.

Its subcellular location is the cytoplasm. Its function is as follows. Catalyzes the GTP-dependent ribosomal translocation step during translation elongation. During this step, the ribosome changes from the pre-translocational (PRE) to the post-translocational (POST) state as the newly formed A-site-bound peptidyl-tRNA and P-site-bound deacylated tRNA move to the P and E sites, respectively. Catalyzes the coordinated movement of the two tRNA molecules, the mRNA and conformational changes in the ribosome. The protein is Elongation factor G of Synechococcus sp. (strain JA-3-3Ab) (Cyanobacteria bacterium Yellowstone A-Prime).